The sequence spans 880 residues: Translation initiation factor IF-2 (880 aa).

Basic and acidic residues-rich tracts occupy residues Q180–K194 and L202–I228. The tract at residues Q180–N289 is disordered. Residues G249–G262 show a composition bias toward basic residues. The tr-type G domain maps to S380 to K549. Residues G389–T396 are G1. G389–T396 contributes to the GTP binding site. Residues G414–H418 are G2. A G3 region spans residues D435–G438. GTP contacts are provided by residues D435–H439 and N489–D492. Residues N489 to D492 form a G4 region. Residues S525–K527 are G5.

The protein belongs to the TRAFAC class translation factor GTPase superfamily. Classic translation factor GTPase family. IF-2 subfamily.

It localises to the cytoplasm. One of the essential components for the initiation of protein synthesis. Protects formylmethionyl-tRNA from spontaneous hydrolysis and promotes its binding to the 30S ribosomal subunits. Also involved in the hydrolysis of GTP during the formation of the 70S ribosomal complex. This Shewanella baltica (strain OS223) protein is Translation initiation factor IF-2.